Reading from the N-terminus, the 202-residue chain is Adenylyl-sulfate kinase (202 aa).

An ATP-binding site is contributed by 31 to 38 (GLSASGKS). Serine 105 serves as the catalytic Phosphoserine intermediate.

It belongs to the APS kinase family.

It carries out the reaction adenosine 5'-phosphosulfate + ATP = 3'-phosphoadenylyl sulfate + ADP + H(+). It participates in sulfur metabolism; hydrogen sulfide biosynthesis; sulfite from sulfate: step 2/3. Catalyzes the synthesis of activated sulfate. This Saccharomyces bayanus (Yeast) protein is Adenylyl-sulfate kinase (MET14).